Consider the following 413-residue polypeptide: Serine/threonine transporter SstT (413 aa).

A run of 8 helical transmembrane segments spans residues 19–39 (IFIGLILGLLVALVTPTLQNV), 61–81 (AVAPILIFVLVMAAIANKKIG), 89–109 (IIVLYLLGTFLAALSAVIAGF), 148–168 (ALFKANFVGVLAWSIGLGLAL), 189–209 (IVYVIIAFAPIGVFGLVSETL), 223–243 (LLAVLVGTMLFVAFVVNPILV), 297–317 (IPLGATINMAGAAITVTILTL), and 325–345 (IQISFFSALLLSVVASICACG).

The protein belongs to the dicarboxylate/amino acid:cation symporter (DAACS) (TC 2.A.23) family.

The protein resides in the cell inner membrane. The enzyme catalyses L-serine(in) + Na(+)(in) = L-serine(out) + Na(+)(out). It catalyses the reaction L-threonine(in) + Na(+)(in) = L-threonine(out) + Na(+)(out). Functionally, involved in the import of serine and threonine into the cell, with the concomitant import of sodium (symport system). The sequence is that of Serine/threonine transporter SstT from Pasteurella multocida (strain Pm70).